Consider the following 466-residue polypeptide: Ceramide glucosyltransferase 1 (466 aa).

Residues leucine 70–phenylalanine 90 form a helical membrane-spanning segment. Residue aspartate 148 is a short sequence motif, D1. Position 200 (aspartate 200) is a short sequence motif, D2. Residue aspartate 294 is a short sequence motif, D3. Residue aspartate 294 is the Proton acceptor of the active site. The (Q/R)XXRW signature appears at arginine 330–tryptophan 334. 2 helical membrane-spanning segments follow: residues cysteine 354–tyrosine 374 and threonine 403–isoleucine 423.

This sequence belongs to the glycosyltransferase 2 family. As to expression, expressed in excretory canals, pharyngeal intestinal valve, intestine and intestinal rectal valve.

It localises to the membrane. The enzyme catalyses an N-acylsphing-4-enine + UDP-alpha-D-glucose = a beta-D-glucosyl-(1&lt;-&gt;1')-N-acylsphing-4-enine + UDP + H(+). The catalysed reaction is an N-acyl-15-methylhexadecasphing-4-enine + UDP-alpha-D-glucose = an N-acyl-1-beta-D-glucosyl-15-methylhexadecasphing-4-enine + UDP + H(+). The protein operates within lipid metabolism; sphingolipid metabolism. Its function is as follows. Catalyzes the first glycosylation step in glycosphingolipid biosynthesis, the transfer of glucose to ceramide to produce glucosylceramides (GlcCer). GlcCer are known to contribute to the physical properties and physiological functions of membranes and may regulate signal transduction. Only branched-chain sphingoid bases like 15-methylhexadecasphing-4-enine are used for generating complex sphingolipids in Caenorhabditis elegans. Together with cgt-3, plays a role in the trafficking of proteins such as mig-14 to the cell membrane in intestinal cells. This Caenorhabditis elegans protein is Ceramide glucosyltransferase 1.